Consider the following 379-residue polypeptide: Ribosomal RNA large subunit methyltransferase G (379 aa).

Belongs to the methyltransferase superfamily. RlmG family.

It localises to the cytoplasm. It catalyses the reaction guanosine(1835) in 23S rRNA + S-adenosyl-L-methionine = N(2)-methylguanosine(1835) in 23S rRNA + S-adenosyl-L-homocysteine + H(+). Its function is as follows. Specifically methylates the guanine in position 1835 (m2G1835) of 23S rRNA. The polypeptide is Ribosomal RNA large subunit methyltransferase G (Pectobacterium atrosepticum (strain SCRI 1043 / ATCC BAA-672) (Erwinia carotovora subsp. atroseptica)).